The primary structure comprises 168 residues: Peptide deformylase (168 aa).

Positions 91 and 133 each coordinate Fe cation. Glu134 is a catalytic residue. Position 137 (His137) interacts with Fe cation.

It belongs to the polypeptide deformylase family. Fe(2+) serves as cofactor.

The enzyme catalyses N-terminal N-formyl-L-methionyl-[peptide] + H2O = N-terminal L-methionyl-[peptide] + formate. Its function is as follows. Removes the formyl group from the N-terminal Met of newly synthesized proteins. Requires at least a dipeptide for an efficient rate of reaction. N-terminal L-methionine is a prerequisite for activity but the enzyme has broad specificity at other positions. This Endomicrobium trichonymphae protein is Peptide deformylase.